The sequence spans 553 residues: Glutamyl-tRNA(Gln) amidotransferase subunit B, mitochondrial (553 aa).

The N-terminal 18 residues, 1–18 (MAASTSGYSGVLFRLRKY), are a transit peptide targeting the mitochondrion.

This sequence belongs to the GatB/GatE family. GatB subfamily. In terms of assembly, subunit of the heterotrimeric GatCAB amidotransferase (AdT) complex, composed of A (qrsl1), B (gatb) and C (gatc) subunits.

It is found in the mitochondrion. The enzyme catalyses L-glutamyl-tRNA(Gln) + L-glutamine + ATP + H2O = L-glutaminyl-tRNA(Gln) + L-glutamate + ADP + phosphate + H(+). In terms of biological role, allows the formation of correctly charged Gln-tRNA(Gln) through the transamidation of misacylated Glu-tRNA(Gln) in the mitochondria. The reaction takes place in the presence of glutamine and ATP through an activated gamma-phospho-Glu-tRNA(Gln). In Danio rerio (Zebrafish), this protein is Glutamyl-tRNA(Gln) amidotransferase subunit B, mitochondrial.